We begin with the raw amino-acid sequence, 214 residues long: Large ribosomal subunit protein uL3 (214 aa).

N5-methylglutamine is present on Q153.

It belongs to the universal ribosomal protein uL3 family. As to quaternary structure, part of the 50S ribosomal subunit. Forms a cluster with proteins L14 and L19. Post-translationally, methylated by PrmB.

Functionally, one of the primary rRNA binding proteins, it binds directly near the 3'-end of the 23S rRNA, where it nucleates assembly of the 50S subunit. The chain is Large ribosomal subunit protein uL3 from Aromatoleum aromaticum (strain DSM 19018 / LMG 30748 / EbN1) (Azoarcus sp. (strain EbN1)).